Consider the following 399-residue polypeptide: Enoyl-[acyl-carrier-protein] reductase [NADH] (399 aa).

NAD(+) is bound by residues 48 to 53 (GASTGY), 74 to 75 (FE), 111 to 112 (DA), and 139 to 140 (LA). Residue Y225 participates in substrate binding. Y235 (proton donor) is an active-site residue. Residues K244 and 274–276 (VVT) contribute to the NAD(+) site.

It belongs to the TER reductase family. Monomer.

The catalysed reaction is a 2,3-saturated acyl-[ACP] + NAD(+) = a (2E)-enoyl-[ACP] + NADH + H(+). It functions in the pathway lipid metabolism; fatty acid biosynthesis. Involved in the final reduction of the elongation cycle of fatty acid synthesis (FAS II). Catalyzes the reduction of a carbon-carbon double bond in an enoyl moiety that is covalently linked to an acyl carrier protein (ACP). This is Enoyl-[acyl-carrier-protein] reductase [NADH] from Yersinia pseudotuberculosis serotype O:1b (strain IP 31758).